Consider the following 439-residue polypeptide: GTPase Obg (439 aa).

Positions 4–162 (IEFIDVVDIY…KHIQLELKLL (159 aa)) constitute an Obg domain. An OBG-type G domain is found at 163 to 336 (ADVGLIGYPN…LKYAMWDIIK (174 aa)). GTP-binding positions include 169–176 (GYPNVGKS), 194–198 (FTTLV), 218–221 (DIPG), 288–291 (NKSD), and 317–319 (SAV). S176 and T196 together coordinate Mg(2+). The OCT domain maps to 361–439 (LVLPDRVDIK…VEGVDFIFKE (79 aa)).

It belongs to the TRAFAC class OBG-HflX-like GTPase superfamily. OBG GTPase family. In terms of assembly, monomer. Mg(2+) is required as a cofactor.

The protein localises to the cytoplasm. In terms of biological role, an essential GTPase which binds GTP, GDP and possibly (p)ppGpp with moderate affinity, with high nucleotide exchange rates and a fairly low GTP hydrolysis rate. Plays a role in control of the cell cycle, stress response, ribosome biogenesis and in those bacteria that undergo differentiation, in morphogenesis control. The protein is GTPase Obg of Fervidobacterium nodosum (strain ATCC 35602 / DSM 5306 / Rt17-B1).